The following is a 320-amino-acid chain: MDYRVLLYYKYVTIDDPETFAAEHLKFCKEHHLKGRILVSTEGINGTLSGTKEDTDKYIEHMHADSRFADLTFKIDEAESHAFKKMHVRPRREIVALDLEEDINPREITGKYYSPKEFKAALEDENTVILDARNDYEYDLGHFRGAIRPDITRFRDLPEWVRNNKEQLDGKNIVTYCTGGIRCEKFSGWLVKEGFENVGQLHGGIATYGKDPETKGLYWDGKMYVFDERISVDVNQIDKTVIGKEHFDGTPCERYINCANPECNKQILVSEENEEKYLGACSYDCAKHERNRYVARHHISNEEWQRRLNNFKDVPEHTHA.

The 95-residue stretch at 123–217 (EDENTVILDA…YGKDPETKGL (95 aa)) folds into the Rhodanese domain. The active-site Cysteine persulfide intermediate is Cys177.

This sequence belongs to the TrhO family.

It catalyses the reaction uridine(34) in tRNA + AH2 + O2 = 5-hydroxyuridine(34) in tRNA + A + H2O. Catalyzes oxygen-dependent 5-hydroxyuridine (ho5U) modification at position 34 in tRNAs. This is tRNA uridine(34) hydroxylase from Staphylococcus epidermidis (strain ATCC 35984 / DSM 28319 / BCRC 17069 / CCUG 31568 / BM 3577 / RP62A).